The sequence spans 1080 residues: ATP-dependent helicase/deoxyribonuclease subunit B (1080 aa).

It belongs to the helicase family. AddB/RexB type 2 subfamily. As to quaternary structure, heterodimer of AddA and RexB. Mg(2+) is required as a cofactor.

The heterodimer acts as both an ATP-dependent DNA helicase and an ATP-dependent, dual-direction single-stranded exonuclease. Recognizes the chi site generating a DNA molecule suitable for the initiation of homologous recombination. This subunit has 5' -&gt; 3' nuclease activity but not helicase activity. The chain is ATP-dependent helicase/deoxyribonuclease subunit B from Streptococcus mutans serotype c (strain ATCC 700610 / UA159).